A 241-amino-acid polypeptide reads, in one-letter code: MQKVALVTGAGQGIGKAIALRLVKDGFAVAIADYNDATATAVAAEINQAGGRAVAIKVDVSRRDQVFAAVEQARKALGGFNVIVNNAGIAPSTPIESITEEIVDRVYNINVKGVIWGMQAAVEAFKKEGHGGKIVNACSQAGHVGNPELAVYSSSKFAVRGLTQTAARDLAPLGITVNGFCPGIVKTPMWAEIDRQCRKRRANRWATARLNLPNASPLAACRSLKTSPPACRSSPARIPTI.

Residue 6–30 (LVTGAGQGIGKAIALRLVKDGFAVA) participates in NAD(+) binding. S139 is a substrate binding site. The active-site Proton acceptor is Y152. K156 is an active-site residue.

It belongs to the short-chain dehydrogenases/reductases (SDR) family. Homotetramer.

The enzyme catalyses (S)-acetoin + NAD(+) = diacetyl + NADH + H(+). Functionally, catalyzes the irreversible reduction of 2,3-butanediol to (S)-acetoin in the presence of NADH. The sequence is that of Diacetyl reductase [(S)-acetoin forming] (budC) from Raoultella terrigena (Klebsiella terrigena).